The sequence spans 89 residues: Putative protein T-ENOL (89 aa).

Disordered stretches follow at residues 1 to 31 and 54 to 89; these read MAST…KASL and RSHM…TDTR.

Specifically expressed in testis (at protein level).

This is Putative protein T-ENOL from Rattus norvegicus (Rat).